Consider the following 508-residue polypeptide: Transposase (508 aa).

The region spanning 3-65 (LLSVIRRWHF…PFADRLSAWL (63 aa)) is the HTH IS21-type domain. The region spanning 124–299 (LAFEPGEAFQ…TIADIWVEEV (176 aa)) is the Integrase catalytic domain.

The protein belongs to the transposase IS21/IS408/IS1162 family.

Required for the transposition of the insertion element. This is Transposase (nmoT) from Aminobacter aminovorans (Chelatobacter heintzii).